A 151-amino-acid chain; its full sequence is Inorganic triphosphatase (151 aa).

The region spanning 1–148 (MTEIERKFLV…KRYKNKALAL (148 aa)) is the CYTH domain. Y27 (proton acceptor) is an active-site residue.

Homodimer.

The enzyme catalyses triphosphate + H2O = phosphate + diphosphate. Activated by magnesium and mangenese ions, and inhibited by calcium, zinc and copper ions. Functionally, involved in the hydrolysis of the beta-gamma-phosphoanhydride linkage of triphosphate-containing substrates (inorganic or nucleoside-linked). Catalyzes the hydrolysis of inorganic triphosphate (PPPi). The enzyme has a strong preference for linear PPPi compared with cyclic PPPi (cyclic trimetaphosphate) and to the linear P4. The longer chains polyphosphate are not hydrolyzed. It has only a slight thiamine triphosphatase (ThTPase) activity. Nucleoside triphosphatase activity is negligible in the presence of magnesium, but a small activity is observed in the presence of manganese, in particular with GTP. The sequence is that of Inorganic triphosphatase from Nitrosomonas europaea (strain ATCC 19718 / CIP 103999 / KCTC 2705 / NBRC 14298).